Reading from the N-terminus, the 494-residue chain is Alpha-amylase-related protein (494 aa).

The N-terminal stretch at 1–20 (MIKFALALTLCLAGASLSLA) is a signal peptide. Pyrrolidone carboxylic acid is present on Q21. An intrachain disulfide couples C48 to C104. Ca(2+)-binding residues include N118, Q169, and D178. C157 and C171 are joined by a disulfide. R206 serves as a coordination point for chloride. Residue D208 is the Nucleophile of the active site. H212 contacts Ca(2+). The Proton donor role is filled by E245. Positions 308 and 343 each coordinate chloride. 3 disulfide bridges follow: C376-C382, C418-C441, and C448-C460.

This sequence belongs to the glycosyl hydrolase 13 family. In terms of assembly, monomer. Ca(2+) serves as cofactor. Chloride is required as a cofactor.

Its subcellular location is the secreted. It catalyses the reaction Endohydrolysis of (1-&gt;4)-alpha-D-glucosidic linkages in polysaccharides containing three or more (1-&gt;4)-alpha-linked D-glucose units.. This chain is Alpha-amylase-related protein (Amyrel), found in Drosophila lini (Fruit fly).